A 714-amino-acid polypeptide reads, in one-letter code: Polyribonucleotide nucleotidyltransferase (714 aa).

Residues D496 and D502 each coordinate Mg(2+). One can recognise a KH domain in the interval 562–621 (PRLLTIKIDPDLIGMVIGPGGKTIKGITEQTRAKVDIADDGTVTIASSESENAEKAKRLI). The S1 motif domain occupies 631 to 699 (GDVYFGKVTR…NKGRINLTRL (69 aa)).

It belongs to the polyribonucleotide nucleotidyltransferase family. Requires Mg(2+) as cofactor.

Its subcellular location is the cytoplasm. The catalysed reaction is RNA(n+1) + phosphate = RNA(n) + a ribonucleoside 5'-diphosphate. Involved in mRNA degradation. Catalyzes the phosphorolysis of single-stranded polyribonucleotides processively in the 3'- to 5'-direction. The sequence is that of Polyribonucleotide nucleotidyltransferase from Picosynechococcus sp. (strain ATCC 27264 / PCC 7002 / PR-6) (Agmenellum quadruplicatum).